The following is a 3232-amino-acid chain: D-lysergyl-peptide-synthetase subunit 1 (3232 aa).

The tract at residues 90 to 474 (GCLTYDEMSI…LGRKDDQVKI (385 aa)) is adenylation (A) domain 1. The region spanning 617–686 (REKLLQGCFA…TLREIVIVST (70 aa)) is the Carrier 1 domain. O-(pantetheine 4'-phosphoryl)serine is present on serine 649. The interval 731–1122 (EDIYPCTHLQ…EHILTQIHSN (392 aa)) is condensation (C) domain 1. Residues 1165-1572 (QAKCQAQPDA…RRKDAQVKIR (408 aa)) form an adenylation (A) domain 2 region. The 69-residue stretch at 1717–1785 (TEHEISAIWA…TIRKLALARG (69 aa)) folds into the Carrier 2 domain. At serine 1749 the chain carries O-(pantetheine 4'-phosphoryl)serine. Positions 1835 to 2252 (ERIYPCSPIQ…ALPVLDEDQM (418 aa)) are condensation (C) domain 2. The interval 2276–2675 (QQCLRCPDSP…GRNDDQVKVR (400 aa)) is adenylation (A) domain 3. The Carrier 3 domain occupies 2810-2878 (MEAELQRLVG…RVSDLARIVE (69 aa)). Position 2842 is an O-(pantetheine 4'-phosphoryl)serine (serine 2842). The interval 2943–3218 (LYFSKPVASE…LLHWLHQQHI (276 aa)) is cyclization (Cyc) domain.

This sequence belongs to the NRP synthetase family.

Its pathway is alkaloid biosynthesis; ergot alkaloid biosynthesis. Functionally, D-lysergyl-peptide-synthetase subunit 1; part of the gene cluster that mediates the biosynthesis of fungal ergot alkaloid. DmaW catalyzes the first step of ergot alkaloid biosynthesis by condensing dimethylallyl diphosphate (DMAP) and tryptophan to form 4-dimethylallyl-L-tryptophan. The second step is catalyzed by the methyltransferase easF that methylates 4-dimethylallyl-L-tryptophan in the presence of S-adenosyl-L-methionine, resulting in the formation of 4-dimethylallyl-L-abrine. The catalase easC and the FAD-dependent oxidoreductase easE then transform 4-dimethylallyl-L-abrine to chanoclavine-I which is further oxidized by easD in the presence of NAD(+), resulting in the formation of chanoclavine-I aldehyde. Agroclavine dehydrogenase easG then mediates the conversion of chanoclavine-I aldehyde to agroclavine via a non-enzymatic adduct reaction: the substrate is an iminium intermediate that is formed spontaneously from chanoclavine-I aldehyde in the presence of glutathione. The presence of easA is not required to complete this reaction. Further conversion of agroclavine to paspalic acid is a two-step process involving oxidation of agroclavine to elymoclavine and of elymoclavine to paspalic acid, the second step being performed by the elymoclavine oxidase cloA. Paspalic acid is then further converted to D-lysergic acid. Ergopeptines are assembled from D-lysergic acid and three different amino acids by the D-lysergyl-peptide-synthetases composed each of a monomudular and a trimodular nonribosomal peptide synthetase subunit. LpsB and lpsC encode the monomodular subunits responsible for D-lysergic acid activation and incorporation into the ergopeptine backbone. LpsA1 and A2 subunits encode the trimodular nonribosomal peptide synthetase assembling the tripeptide portion of ergopeptines. LpsA1 is responsible for formation of the major ergopeptine, ergotamine, and lpsA2 for alpha-ergocryptine, the minor ergopeptine of the total alkaloid mixture elaborated by C.purpurea. D-lysergyl-tripeptides are assembled by the nonribosomal peptide synthetases and released as N-(D-lysergyl-aminoacyl)-lactams. Cyclolization of the D-lysergyl-tripeptides is performed by the Fe(2+)/2-ketoglutarate-dependent dioxygenase easH which introduces a hydroxyl group into N-(D-lysergyl-aminoacyl)-lactam at alpha-C of the aminoacyl residue followed by spontaneous condensation with the terminal lactam carbonyl group. This Claviceps purpurea (Ergot fungus) protein is D-lysergyl-peptide-synthetase subunit 1.